A 290-amino-acid chain; its full sequence is Glutamate racemase (290 aa).

Substrate is bound by residues 32–33 (DS) and 64–65 (YG). C96 acts as the Proton donor/acceptor in catalysis. 97–98 (NT) is a substrate binding site. Catalysis depends on C208, which acts as the Proton donor/acceptor. Position 209–210 (209–210 (TH)) interacts with substrate.

The protein belongs to the aspartate/glutamate racemases family.

The enzyme catalyses L-glutamate = D-glutamate. Its pathway is cell wall biogenesis; peptidoglycan biosynthesis. Its function is as follows. Provides the (R)-glutamate required for cell wall biosynthesis. The sequence is that of Glutamate racemase from Sodalis glossinidius (strain morsitans).